A 321-amino-acid chain; its full sequence is Probable arabinan endo-1,5-alpha-L-arabinosidase C (321 aa).

The first 18 residues, 1–18 (MYLYTLILLFLASANVNA), serve as a signal peptide directing secretion. Asp-33 functions as the Proton acceptor in the catalytic mechanism. Residue Asn-192 is glycosylated (N-linked (GlcNAc...) asparagine). The active-site Proton donor is the Glu-200. Asn-224 is a glycosylation site (N-linked (GlcNAc...) asparagine).

Belongs to the glycosyl hydrolase 43 family.

It is found in the secreted. It carries out the reaction Endohydrolysis of (1-&gt;5)-alpha-arabinofuranosidic linkages in (1-&gt;5)-arabinans.. It functions in the pathway glycan metabolism; L-arabinan degradation. Its function is as follows. Endo-1,5-alpha-L-arabinanase involved in degradation of pectin. Its preferred substrate is linear 1,5-alpha-L-arabinan. The chain is Probable arabinan endo-1,5-alpha-L-arabinosidase C (abnC) from Aspergillus fumigatus (strain CBS 144.89 / FGSC A1163 / CEA10) (Neosartorya fumigata).